Reading from the N-terminus, the 559-residue chain is Formate--tetrahydrofolate ligase (559 aa).

An ATP-binding site is contributed by 67 to 74 (TPAGEGKS).

The protein belongs to the formate--tetrahydrofolate ligase family.

It catalyses the reaction (6S)-5,6,7,8-tetrahydrofolate + formate + ATP = (6R)-10-formyltetrahydrofolate + ADP + phosphate. It functions in the pathway one-carbon metabolism; tetrahydrofolate interconversion. This chain is Formate--tetrahydrofolate ligase, found in Lactobacillus delbrueckii subsp. bulgaricus (strain ATCC 11842 / DSM 20081 / BCRC 10696 / JCM 1002 / NBRC 13953 / NCIMB 11778 / NCTC 12712 / WDCM 00102 / Lb 14).